A 586-amino-acid chain; its full sequence is MKASSYLIPTAKEDPQDAVVASHKLMMRAGLIRKSAAGLYSYLPLGLRVLRKIEGIVRKEMDKAGGLEFQLPILTPSEIWKESGRWDKMGKEMFRLKDRHDNESCLGPTHEESFCVLVKPMVRSYKDLPINVYQIHTKFRDEIRPRFGVIRSREFTMKDAYSFHLDDESLDKTYQTMRKTYRRIFAGMGLTTIPVQADSGNMGGSASEEFMVVSPIGEETLTICPSCHYSGNIEKTPVIVNRNATKQVFDGKGKLHTPAKKSITEVAEFLNTKEENLLKAVAVVADGQYILVFLEGDRELNENKLKNHLGCNELRPMGPAEMEKLGLVPGFIGPGFPKSESLKIYIDALLDWNFSYIAGGNEIDHHIAGVQLTSIFKEEEVTKIDISQAKVGDPCPSCGTGLTAEKGIEVGHIFKLGQKYSKAFDITVLNDKGKATTTTMGCYGIGVNRCMATVIEQCNDEKGIFWPVSIAPFTVCLVSIAKNPDDIAKIETIYKSLVESGIEVLWDDRDLGPGFKFKDSELIGFPIRITLGKGFLEKNEITILDRKSMAEDTLVYTTNEELVTHLKLKISQLEETIEKEVSLAGT.

This sequence belongs to the class-II aminoacyl-tRNA synthetase family. ProS type 1 subfamily. In terms of assembly, homodimer.

Its subcellular location is the cytoplasm. It carries out the reaction tRNA(Pro) + L-proline + ATP = L-prolyl-tRNA(Pro) + AMP + diphosphate. Catalyzes the attachment of proline to tRNA(Pro) in a two-step reaction: proline is first activated by ATP to form Pro-AMP and then transferred to the acceptor end of tRNA(Pro). As ProRS can inadvertently accommodate and process non-cognate amino acids such as alanine and cysteine, to avoid such errors it has two additional distinct editing activities against alanine. One activity is designated as 'pretransfer' editing and involves the tRNA(Pro)-independent hydrolysis of activated Ala-AMP. The other activity is designated 'posttransfer' editing and involves deacylation of mischarged Ala-tRNA(Pro). The misacylated Cys-tRNA(Pro) is not edited by ProRS. This is Proline--tRNA ligase from Leptospira biflexa serovar Patoc (strain Patoc 1 / Ames).